Reading from the N-terminus, the 591-residue chain is Aspartate--tRNA ligase (591 aa).

Residue Glu-171 coordinates L-aspartate. An aspartate region spans residues 195-198; the sequence is QLFK. Position 217 (Arg-217) interacts with L-aspartate. Residues 217–219 and Gln-226 contribute to the ATP site; that span reads RDE. His-448 lines the L-aspartate pocket. ATP is bound at residue Glu-482. Arg-489 is an L-aspartate binding site. 534-537 is an ATP binding site; the sequence is GLDR.

Belongs to the class-II aminoacyl-tRNA synthetase family. Type 1 subfamily. As to quaternary structure, homodimer.

It localises to the cytoplasm. The enzyme catalyses tRNA(Asp) + L-aspartate + ATP = L-aspartyl-tRNA(Asp) + AMP + diphosphate. Catalyzes the attachment of L-aspartate to tRNA(Asp) in a two-step reaction: L-aspartate is first activated by ATP to form Asp-AMP and then transferred to the acceptor end of tRNA(Asp). This Vibrio cholerae serotype O1 (strain ATCC 39541 / Classical Ogawa 395 / O395) protein is Aspartate--tRNA ligase.